Reading from the N-terminus, the 307-residue chain is Universal stress protein A family protein C25B2.10 (307 aa).

Residues 1 to 63 (MSESAPAGSK…RSSMEQPTFR (63 aa)) form a disordered region. Residues 21 to 30 (PEPRTSKDQQ) are compositionally biased toward basic and acidic residues. Ser-44 is subject to Phosphoserine. A Phosphothreonine modification is found at Thr-48. Ser-98 and Ser-102 each carry phosphoserine.

This sequence belongs to the universal stress protein A family.

Its subcellular location is the barrier septum. The protein resides in the cell tip. The sequence is that of Universal stress protein A family protein C25B2.10 from Schizosaccharomyces pombe (strain 972 / ATCC 24843) (Fission yeast).